The chain runs to 309 residues: Aspartate carbamoyltransferase catalytic subunit (309 aa).

Carbamoyl phosphate is bound by residues arginine 58 and threonine 59. Lysine 86 contacts L-aspartate. Carbamoyl phosphate contacts are provided by arginine 108, histidine 136, and glutamine 139. The L-aspartate site is built by arginine 169 and arginine 223. Carbamoyl phosphate is bound by residues glycine 265 and proline 266.

This sequence belongs to the aspartate/ornithine carbamoyltransferase superfamily. ATCase family. As to quaternary structure, heterododecamer (2C3:3R2) of six catalytic PyrB chains organized as two trimers (C3), and six regulatory PyrI chains organized as three dimers (R2).

It carries out the reaction carbamoyl phosphate + L-aspartate = N-carbamoyl-L-aspartate + phosphate + H(+). It functions in the pathway pyrimidine metabolism; UMP biosynthesis via de novo pathway; (S)-dihydroorotate from bicarbonate: step 2/3. Catalyzes the condensation of carbamoyl phosphate and aspartate to form carbamoyl aspartate and inorganic phosphate, the committed step in the de novo pyrimidine nucleotide biosynthesis pathway. The sequence is that of Aspartate carbamoyltransferase catalytic subunit from Akkermansia muciniphila (strain ATCC BAA-835 / DSM 22959 / JCM 33894 / BCRC 81048 / CCUG 64013 / CIP 107961 / Muc).